The sequence spans 102 residues: Large ribosomal subunit protein bL21 (102 aa).

This sequence belongs to the bacterial ribosomal protein bL21 family. Part of the 50S ribosomal subunit. Contacts protein L20.

Its function is as follows. This protein binds to 23S rRNA in the presence of protein L20. The protein is Large ribosomal subunit protein bL21 of Oleidesulfovibrio alaskensis (strain ATCC BAA-1058 / DSM 17464 / G20) (Desulfovibrio alaskensis).